Reading from the N-terminus, the 242-residue chain is Pyridoxine 5'-phosphate synthase (242 aa).

Residue Asn-6 coordinates 3-amino-2-oxopropyl phosphate. Asp-8–His-9 is a 1-deoxy-D-xylulose 5-phosphate binding site. 3-amino-2-oxopropyl phosphate is bound at residue Arg-17. His-42 (proton acceptor) is an active-site residue. 1-deoxy-D-xylulose 5-phosphate is bound by residues Arg-44 and His-49. Glu-69 acts as the Proton acceptor in catalysis. Thr-99 is a 1-deoxy-D-xylulose 5-phosphate binding site. His-190 (proton donor) is an active-site residue. 3-amino-2-oxopropyl phosphate-binding positions include Gly-191 and Gly-212–His-213.

This sequence belongs to the PNP synthase family. As to quaternary structure, homooctamer; tetramer of dimers.

It localises to the cytoplasm. The enzyme catalyses 3-amino-2-oxopropyl phosphate + 1-deoxy-D-xylulose 5-phosphate = pyridoxine 5'-phosphate + phosphate + 2 H2O + H(+). The protein operates within cofactor biosynthesis; pyridoxine 5'-phosphate biosynthesis; pyridoxine 5'-phosphate from D-erythrose 4-phosphate: step 5/5. Catalyzes the complicated ring closure reaction between the two acyclic compounds 1-deoxy-D-xylulose-5-phosphate (DXP) and 3-amino-2-oxopropyl phosphate (1-amino-acetone-3-phosphate or AAP) to form pyridoxine 5'-phosphate (PNP) and inorganic phosphate. The polypeptide is Pyridoxine 5'-phosphate synthase (Neisseria meningitidis serogroup B (strain ATCC BAA-335 / MC58)).